The chain runs to 202 residues: Nuclear transcription factor Y subunit C-6 (202 aa).

Over residues 1–16 (MAENNNNNGDNMNNDN) the composition is skewed to low complexity. 2 disordered regions span residues 1 to 29 (MAEN…LPPM) and 180 to 202 (AWPA…GGGN). The segment covering 17–29 (HQQPPSYSQLPPM) has biased composition (polar residues).

The protein belongs to the NFYC/HAP5 subunit family. Heterotrimeric transcription factor composed of three components, NF-YA, NF-YB and NF-YC. NF-YB and NF-YC must interact and dimerize for NF-YA association and DNA binding. Expressed in flowers and siliques.

The protein resides in the nucleus. Functionally, stimulates the transcription of various genes by recognizing and binding to a CCAAT motif in promoters. This chain is Nuclear transcription factor Y subunit C-6 (NFYC6), found in Arabidopsis thaliana (Mouse-ear cress).